Reading from the N-terminus, the 164-residue chain is FMN reductase (NADH) RutF (164 aa).

This sequence belongs to the non-flavoprotein flavin reductase family. RutF subfamily.

It catalyses the reaction FMNH2 + NAD(+) = FMN + NADH + 2 H(+). Catalyzes the reduction of FMN to FMNH2 which is used to reduce pyrimidine by RutA via the Rut pathway. In Escherichia coli O127:H6 (strain E2348/69 / EPEC), this protein is FMN reductase (NADH) RutF.